The chain runs to 499 residues: WASH complex subunit 1 (499 aa).

Disordered stretches follow at residues 317–433 and 448–499; these read GPVR…GAVT and RKGI…DGWN. Pro residues predominate over residues 333 to 363; that stretch reads AAPPPPPPPPPPPPPPPPAQTSAIPSPPPFP. Positions 391–413 constitute a WH2 domain; that stretch reads PRSELMAAIRNAGGVHGGRLRSP. Acidic residues predominate over residues 490–499; the sequence is HSEDDEDGWN. S491 carries the post-translational modification Phosphoserine.

Belongs to the WASH1 family. As to quaternary structure, component of the WASH complex. Interacts with spir and capu. Interacts (via N-terminus) with Rho1 (via N-terminus).

Its function is as follows. Acts as a nucleation-promoting factor by activating the Arp2/3 complex to induce actin polymerization. Participates in both linear- and branched-actin networks. Functions in linear-filament (bundled F-actin) by acting downstream of Rho1 and regulating actin and microtubule organization during oogenesis. Nucleates actin in an Arp2/3-dependent manner and exhibits F-actin and microtubule bundling and cross-linking activity in the egg chamber. During embryogenesis, acts downstream of Rho1 to activate the Arp2/3 complex which is necessary for the developmental migration of tail hemocytes anteriorly along the ventral midline. Its function in hemocyte transmigration is independent of the WASH complex. May play a role in endosomal sorting; its assembly in the WASH complex may regulate its nucleation-promoting factor (NPF) activity. This Drosophila melanogaster (Fruit fly) protein is WASH complex subunit 1.